The primary structure comprises 81 residues: ATP synthase subunit c (81 aa).

Transmembrane regions (helical) follow at residues 5–25 and 57–77; these read VAAA…IGPG and LAFM…LLFA.

The protein belongs to the ATPase C chain family. In terms of assembly, F-type ATPases have 2 components, F(1) - the catalytic core - and F(0) - the membrane proton channel. F(1) has five subunits: alpha(3), beta(3), gamma(1), delta(1), epsilon(1). F(0) has four main subunits: a(1), b(1), b'(1) and c(10-14). The alpha and beta chains form an alternating ring which encloses part of the gamma chain. F(1) is attached to F(0) by a central stalk formed by the gamma and epsilon chains, while a peripheral stalk is formed by the delta, b and b' chains.

The protein resides in the cellular thylakoid membrane. Its function is as follows. F(1)F(0) ATP synthase produces ATP from ADP in the presence of a proton or sodium gradient. F-type ATPases consist of two structural domains, F(1) containing the extramembraneous catalytic core and F(0) containing the membrane proton channel, linked together by a central stalk and a peripheral stalk. During catalysis, ATP synthesis in the catalytic domain of F(1) is coupled via a rotary mechanism of the central stalk subunits to proton translocation. In terms of biological role, key component of the F(0) channel; it plays a direct role in translocation across the membrane. A homomeric c-ring of between 10-14 subunits forms the central stalk rotor element with the F(1) delta and epsilon subunits. The protein is ATP synthase subunit c of Microcystis aeruginosa (strain NIES-843 / IAM M-2473).